Here is a 178-residue protein sequence, read N- to C-terminus: Protein GrpE (178 aa).

It belongs to the GrpE family. Homodimer.

It localises to the cytoplasm. In terms of biological role, participates actively in the response to hyperosmotic and heat shock by preventing the aggregation of stress-denatured proteins, in association with DnaK and GrpE. It is the nucleotide exchange factor for DnaK and may function as a thermosensor. Unfolded proteins bind initially to DnaJ; upon interaction with the DnaJ-bound protein, DnaK hydrolyzes its bound ATP, resulting in the formation of a stable complex. GrpE releases ADP from DnaK; ATP binding to DnaK triggers the release of the substrate protein, thus completing the reaction cycle. Several rounds of ATP-dependent interactions between DnaJ, DnaK and GrpE are required for fully efficient folding. This chain is Protein GrpE, found in Bordetella avium (strain 197N).